The primary structure comprises 432 residues: Adenylosuccinate synthetase (432 aa).

GTP-binding positions include 11–17 (GDEGKGK) and 39–41 (GHT). Asp-12 serves as the catalytic Proton acceptor. Mg(2+) is bound by residues Asp-12 and Gly-39. IMP-binding positions include 12-15 (DEGK), 37-40 (NAGH), Thr-134, Arg-148, Asn-230, Thr-245, and Arg-309. The Proton donor role is filled by His-40. Substrate is bound at residue 305-311 (VTTGRKR). GTP contacts are provided by residues Arg-311, 337–339 (KLD), and 419–421 (GTG).

It belongs to the adenylosuccinate synthetase family. In terms of assembly, homodimer. The cofactor is Mg(2+).

The protein localises to the cytoplasm. The catalysed reaction is IMP + L-aspartate + GTP = N(6)-(1,2-dicarboxyethyl)-AMP + GDP + phosphate + 2 H(+). The protein operates within purine metabolism; AMP biosynthesis via de novo pathway; AMP from IMP: step 1/2. Its function is as follows. Plays an important role in the de novo pathway and in the salvage pathway of purine nucleotide biosynthesis. Catalyzes the first committed step in the biosynthesis of AMP from IMP. The polypeptide is Adenylosuccinate synthetase (Candida glabrata (strain ATCC 2001 / BCRC 20586 / JCM 3761 / NBRC 0622 / NRRL Y-65 / CBS 138) (Yeast)).